We begin with the raw amino-acid sequence, 345 residues long: MGLEGSEKLEHEIEQVHDNIENRKEEVSTLQDMANDLEKLTDHIEATYIGRGVPHDHAKTGSRKPSSGQLIATMQNEIDRLKKEGDKVSILLMQERKKRKELESAKNNLLNVYDSLKMQKASVSSMVNRKQRAAKEEQKIQEEFERQITDLLEEQQQLKLEIERLEAETERANSETEQYEKQKEALEEEYEELRNECLKHDPQLDAEIRTLQDTFEEVERTLTKQVSDAKIADKPLKDSMFNSNSEKEKIMHALEKAEKDADIYSEFIQQYMEQLESSLEKSSTAIENAQNRLAEMTAHLAESSDYDNDDDTDGIINETDYELDTSQSEFATLTTSSNKSILNES.

Disordered regions lie at residues 1-24 and 296-345; these read MGLEGSEKLEHEIEQVHDNIENRK and MTAH…LNES. Positions 304 to 323 are enriched in acidic residues; it reads SDYDNDDDTDGIINETDYEL. Polar residues predominate over residues 324–345; sequence DTSQSEFATLTTSSNKSILNES.

This is an uncharacterized protein from Schizosaccharomyces pombe (strain 972 / ATCC 24843) (Fission yeast).